The chain runs to 161 residues: Bacterial E2-like ubiquitin protein BilB (161 aa).

Cys-113 (glycyl thioester intermediate) is an active-site residue.

In terms of biological role, component of the Bil (bacterial ISG15-like) antiviral defense system, composed of BilA, BilB, BilC and BilD. The Bil system specifically conjugates a ubiquitin-like moiety (bilA) to the bacteriophage central tail fiber (CTF, or tip attachment protein J) via reactions involving E1 (bilD) and E2 (bilB). Modifies CTF of phage SECphi27 and SECphi4, which probably interferes with assembly of the phage tail. Also modifies T5 baseplate hub protein pb3 (gene D16), but not gp27 of phage T6 (Bil defends against T6). BilB probably accepts ubiquitin from the BilA-BilD (E1) complex and catalyzes its covalent attachment to target protein (CTF). Bil-encoding bacteria produce mostly defective phage SECphi27, many of which have phage assembly defects, including no tails. SECphi27 phage progeny produced in E.coli with the Bil system inject less DNA into naive host cells, maybe because the phage are less able to adsorb and inject their DNA into host cells. Functionally, expression of the Bil system in E.coli (strain MG1655) confers about 100-fold resistance to phage SECphi27, SECphi18, SECphi6, SECphi4 and T5, but not to SECphi17. When cells expressing the Bil system are infected by phage SECphi27 at low multiplicity of infection (0.03 MOI) the culture survives, at 3.0 MOI the culture collapses at the same time as cells without the Bil system. This is Bacterial E2-like ubiquitin protein BilB from Collimonas sp. (strain OK412).